Consider the following 149-residue polypeptide: Cytochrome c-type biogenesis protein CcmE (149 aa).

Residues 1 to 7 (MKPRHKK) are Cytoplasmic-facing. The helical; Signal-anchor for type II membrane protein transmembrane segment at 8–28 (MAVIALSVSALTVAVVLVLNA) threads the bilayer. The Periplasmic portion of the chain corresponds to 29 to 149 (FQSNLVFFFS…AKAQKTSLAQ (121 aa)). Heme-binding residues include histidine 123 and tyrosine 127.

It belongs to the CcmE/CycJ family.

It is found in the cell inner membrane. In terms of biological role, heme chaperone required for the biogenesis of c-type cytochromes. Transiently binds heme delivered by CcmC and transfers the heme to apo-cytochromes in a process facilitated by CcmF and CcmH. This is Cytochrome c-type biogenesis protein CcmE from Nitrosomonas europaea (strain ATCC 19718 / CIP 103999 / KCTC 2705 / NBRC 14298).